Reading from the N-terminus, the 1070-residue chain is DNA-directed RNA polymerase subunit beta (1070 aa).

The protein belongs to the RNA polymerase beta chain family. In plastids the minimal PEP RNA polymerase catalytic core is composed of four subunits: alpha, beta, beta', and beta''. When a (nuclear-encoded) sigma factor is associated with the core the holoenzyme is formed, which can initiate transcription.

It is found in the plastid. It localises to the chloroplast. It carries out the reaction RNA(n) + a ribonucleoside 5'-triphosphate = RNA(n+1) + diphosphate. DNA-dependent RNA polymerase catalyzes the transcription of DNA into RNA using the four ribonucleoside triphosphates as substrates. In Nandina domestica (Heavenly bamboo), this protein is DNA-directed RNA polymerase subunit beta.